The chain runs to 294 residues: Protoheme IX farnesyltransferase (294 aa).

Transmembrane regions (helical) follow at residues 24–44 (VVLL…PGWV), 48–68 (LIAF…AINH), 96–116 (ALWF…LFVN), 118–138 (LTAL…TGYL), 145–165 (NIVI…TAVT), 172–192 (ALLL…ALAI), 224–244 (VLLL…WIYL), 245–265 (LGAL…YFTD), and 268–288 (VVAM…FVFL).

This sequence belongs to the UbiA prenyltransferase family. Protoheme IX farnesyltransferase subfamily.

The protein localises to the cell inner membrane. It catalyses the reaction heme b + (2E,6E)-farnesyl diphosphate + H2O = Fe(II)-heme o + diphosphate. The protein operates within porphyrin-containing compound metabolism; heme O biosynthesis; heme O from protoheme: step 1/1. Converts heme B (protoheme IX) to heme O by substitution of the vinyl group on carbon 2 of heme B porphyrin ring with a hydroxyethyl farnesyl side group. This is Protoheme IX farnesyltransferase from Legionella pneumophila (strain Corby).